The following is a 424-amino-acid chain: tRNA (guanine-N(7)-)-methyltransferase non-catalytic subunit wuho (424 aa).

A disordered region spans residues 42–92; sequence LKGHTSQSQESCTAAAAASTATAASGQAPGGKEQQLANQPEEGGTSASASG. The segment covering 46–68 has biased composition (low complexity); the sequence is TSQSQESCTAAAAASTATAASGQ. WD repeat units follow at residues 96–137, 184–223, 227–265, and 324–364; these read ATST…ARLL, GHLS…DIHS, GHRE…ELLQ, and AGSW…PASS.

This sequence belongs to the WD repeat TRM82 family. Forms a heterodimer with the catalytic subunit Mettl1. Interacts with mei-P26 and weakly interacts with bgcn; required for the function or formation of the mei-P26-bgcn-bam-sxl complex. Interacts with nanos; may be involved in mei-P26-dependent derepression of the BMP signaling pathway. Interacts with Myc; the interaction may be mediated by mei-P26 and may be involved in the regulation of ribosome biogenesis. In testis, it is present at high level in hub cells, a niche for germline stem cells of testis. Ubiquitously expressed in all testicular cells throughout spermatogenesis. Ubiquitously expressed in all germline and somatic cells of the ovary.

Its subcellular location is the nucleus. It is found in the cytoplasm. Its pathway is tRNA modification; N(7)-methylguanine-tRNA biosynthesis. Functionally, required for the Mettl1-dependent formation of N(7)-methylguanine at position 46 (m7G46) in tRNA. In the Mettl1-wuho methyltransferase complex, it is required to stabilize and induce conformational changes of the catalytic subunit. Required for binding of nanos mRNA and repression of translation by the mei-P26-bgcn-bam-sxl complex. May cooperate with mei-P26 and nanos to derepress the BMP signaling pathway. May cooperate with mei-P26 to suppress expression of a subset of microRNAs. May cooperate with mei-P26 to regulate bam expression levels in germline cells during gametogenesis. Required to promote mitosis to meiosis transition during gametogenesis. May regulate germline cell division in part by regulating ribosome biogenesis. This is tRNA (guanine-N(7)-)-methyltransferase non-catalytic subunit wuho from Drosophila melanogaster (Fruit fly).